The sequence spans 288 residues: DegV domain-containing protein (288 aa).

The DegV domain occupies 3-282; sequence IAVMTDSTSY…SGGLGLGYVG (280 aa). Hexadecanoate contacts are provided by threonine 62 and serine 95.

In terms of biological role, may bind long-chain fatty acids, such as palmitate, and may play a role in lipid transport or fatty acid metabolism. The protein is DegV domain-containing protein of Staphylococcus aureus.